A 163-amino-acid chain; its full sequence is Large ribosomal subunit protein uL10 (163 aa).

This sequence belongs to the universal ribosomal protein uL10 family. Part of the ribosomal stalk of the 50S ribosomal subunit. The N-terminus interacts with L11 and the large rRNA to form the base of the stalk. The C-terminus forms an elongated spine to which L12 dimers bind in a sequential fashion forming a multimeric L10(L12)X complex.

Forms part of the ribosomal stalk, playing a central role in the interaction of the ribosome with GTP-bound translation factors. The polypeptide is Large ribosomal subunit protein uL10 (Mannheimia succiniciproducens (strain KCTC 0769BP / MBEL55E)).